The following is a 386-amino-acid chain: MAFVSCFHLRLLFLCLALFMAAECRPDELNKKVDSDETISDDDVSARVQPNGGKIMIVRDNDYDASDDNDNDNDDDDNNDNDNDNDDDNDVDRDNDNDDDDFDDSNDDMLSFELDSIEEKDSDGNDVGSTEGHSVESFEDRPFSLSSVDRNSNALGVAAINVNLSTKLEDSNADVDIMLYLFREDGTISFGNETFDVQAGTVKFNIKISNWDFCDGSAQDCSEAKAGEYLDVNIKFKSKDTPIEVTDEERKSQNKPAVCKDKDTPDTDSDPDDSSDNANDGDDDDDDDCPHIYNMGGDSEMLLNRGVMNGDTYTAMPFGFPKVEIEDGEKKIKFRVPKFDDNVNIDPSVTPGRVPKNASPSPALCLKIHILFIALLQAVTLFINSW.

Positions 1-24 (MAFVSCFHLRLLFLCLALFMAAEC) are cleaved as a signal peptide. Disordered stretches follow at residues 33–145 (VDSD…PFSL) and 244–291 (EVTD…DCPH). Residues 63–107 (YDASDDNDNDNDDDDNNDNDNDNDDDNDVDRDNDNDDDDFDDSND) are compositionally biased toward acidic residues. Composition is skewed to basic and acidic residues over residues 133 to 142 (HSVESFEDRP) and 244 to 265 (EVTD…KDTP). The span at 266-288 (DTDSDPDDSSDNANDGDDDDDDD) shows a compositional bias: acidic residues.

As to expression, component of the acid-insoluble and acid-soluble organic matrix of the aragonitic skeleton (at protein level).

It is found in the secreted. The polypeptide is Skeletal aspartic acid-rich protein 1 (Acropora millepora (Staghorn coral)).